We begin with the raw amino-acid sequence, 562 residues long: ATP-dependent RNA helicase dbp2 (562 aa).

Positions 132–160 (ETFDEAGFPRYVMDEVKAQGFPAPTAIQS) match the Q motif motif. The region spanning 163–338 (WPMALSGRDV…ADFLTDFIQV (176 aa)) is the Helicase ATP-binding domain. 176-183 (AETGSGKT) is a binding site for ATP. The short motif at 286 to 289 (DEAD) is the DEAD box element. The Helicase C-terminal domain maps to 370–515 (HLEKIMEGRE…QIDPRLAEMA (146 aa)). The interval 526–548 (GGYRGRGGGGWRGGRGGGGGGGS) is RNA-binding RGG-box. Gly residues predominate over residues 536 to 550 (WRGGRGGGGGGGSVG). Residues 536–562 (WRGGRGGGGGGGSVGGANALPLNNRRW) are disordered.

This sequence belongs to the DEAD box helicase family. DDX5/DBP2 subfamily. As to quaternary structure, associates with polysomes.

It localises to the cytoplasm. The protein localises to the nucleus. The enzyme catalyses ATP + H2O = ADP + phosphate + H(+). ATP-dependent RNA helicase involved nonsense-mediated mRNA decay and ribosome biogenesis through rRNA processing. This Neurospora crassa (strain ATCC 24698 / 74-OR23-1A / CBS 708.71 / DSM 1257 / FGSC 987) protein is ATP-dependent RNA helicase dbp2 (drh-1).